Here is a 20-residue protein sequence, read N- to C-terminus: Thrombin-like enzyme Cdc SII (20 aa).

Belongs to the peptidase S1 family. Snake venom subfamily. Monomer. Expressed by the venom gland.

Its subcellular location is the secreted. With respect to regulation, strongly inhibited by PMSF and moderately inhibited by leupeptin. Not inhibited by EDTA, aprotinin, pepstatin, and bestatin. Its function is as follows. Thrombin-like snake venom serine protease that coagulates human plasma and bovine fibrinogen by hydrolysis of the alpha chains (FGA) (minimum coagulation dose is 60 ug on fibrinogen). Has fibrinogenolytic activities, and degrades preferentially the Aalpha chain (FGA). Shows amidolytic activity toward N-benzoyl-L-Arg-p-nitroanilide, has a higher activity than Cdc SI. In vivo, intravenous injection induces defibrin(ogen)ation and a loss of the righting reflex and opisthotoxins, together with a typical gyroxin-like effect (18-20 minutes). Subcutaneous injection into the footpads induces moderate edema. Potentiates local hemorrhagic activity induced by metalloproteinases (BaP1). This is Thrombin-like enzyme Cdc SII from Crotalus durissus cumanensis (South American rattlesnake).